Here is a 570-residue protein sequence, read N- to C-terminus: Protein NDNF (570 aa).

Residues 1–19 (MKLCPWYIALILLPVCLQS) form the signal peptide. 2 Fibronectin type-III domains span residues 261–333 (NNAG…VGTF) and 447–566 (PSLP…IVKT). An N-linked (GlcNAc...) asparagine glycan is attached at Asn-324.

The protein localises to the secreted. Secretory protein that plays a role in various cellular processes. Acts as a chemorepellent acting on gonadotropin-releasing hormone (GnRH) expressing neurons regulating their migration to the hypothalamus. Also promotes neuron migration, growth and survival as well as neurite outgrowth and is involved in the development of the olfactory system. May also act through the regulation of growth factors activity and downstream signaling. Also regulates extracellular matrix assembly and cell adhesiveness. Promotes endothelial cell survival, vessel formation and plays an important role in the process of revascularization through NOS3-dependent mechanisms. The polypeptide is Protein NDNF (ndnf) (Xenopus tropicalis (Western clawed frog)).